The primary structure comprises 211 residues: Transcription factor bHLH150 (211 aa).

A compositionally biased stretch (polar residues) spans 1–15; sequence MSSEQGNGSNPSTSP. The disordered stretch occupies residues 1 to 23; sequence MSSEQGNGSNPSTSPEVEGTKTI. One can recognise a bHLH domain in the interval 135-184; it reads AIRGSGGSGRRRKLSAVGNRVRVLGGLVPGCRRTALPELLDETADYIAAL.

In terms of assembly, homodimer. Interacts with PRE3 and ASK7. In terms of processing, phosphorylated by ASK7.

It localises to the nucleus. Its function is as follows. Atypical bHLH transcription factor probably unable to bind DNA. Negatively regulates brassinosteroid signaling. The chain is Transcription factor bHLH150 (BHLH150) from Arabidopsis thaliana (Mouse-ear cress).